The primary structure comprises 102 residues: Small ribosomal subunit protein uS10 (102 aa).

Belongs to the universal ribosomal protein uS10 family. Part of the 30S ribosomal subunit.

Involved in the binding of tRNA to the ribosomes. The protein is Small ribosomal subunit protein uS10 of Clostridium perfringens (strain ATCC 13124 / DSM 756 / JCM 1290 / NCIMB 6125 / NCTC 8237 / Type A).